The following is a 103-amino-acid chain: MYAVIATGGKQYRVAQGDVLRVEKLDAEAGATVEFDNVLLVGSGDDVKVGTPNVEGGKVTATVKAHGRGEKVMIIKFRRRKHHRKQMGHRQDFTEVEITGISG.

The protein belongs to the bacterial ribosomal protein bL21 family. In terms of assembly, part of the 50S ribosomal subunit. Contacts protein L20.

This protein binds to 23S rRNA in the presence of protein L20. The sequence is that of Large ribosomal subunit protein bL21 from Thioalkalivibrio sulfidiphilus (strain HL-EbGR7).